Here is a 498-residue protein sequence, read N- to C-terminus: WD repeat-containing protein 55 homolog (498 aa).

Positions 1 to 133 (MHTHNNFKTP…TFDLDEDDET (133 aa)) are disordered. Acidic residues-rich tracts occupy residues 12-23 (DEDELDDLDEDM), 31-48 (IEQE…EYDL), and 83-95 (SDSD…DAGD). Positions 114 to 123 (PSGSNRQSEA) are enriched in polar residues. WD repeat units follow at residues 155-194 (KLED…NKLL), 199-238 (VHSK…LKKL), 242-280 (AHDD…AIFE), 283-322 (ELED…MYVQ), 325-364 (PYEE…YHCD), and 409-448 (QHNM…DFGD).

The protein belongs to the WD repeat WDR55 family.

The sequence is that of WD repeat-containing protein 55 homolog from Drosophila erecta (Fruit fly).